The primary structure comprises 571 residues: Proline--tRNA ligase (571 aa).

It belongs to the class-II aminoacyl-tRNA synthetase family. ProS type 1 subfamily. As to quaternary structure, homodimer.

Its subcellular location is the cytoplasm. The catalysed reaction is tRNA(Pro) + L-proline + ATP = L-prolyl-tRNA(Pro) + AMP + diphosphate. In terms of biological role, catalyzes the attachment of proline to tRNA(Pro) in a two-step reaction: proline is first activated by ATP to form Pro-AMP and then transferred to the acceptor end of tRNA(Pro). As ProRS can inadvertently accommodate and process non-cognate amino acids such as alanine and cysteine, to avoid such errors it has two additional distinct editing activities against alanine. One activity is designated as 'pretransfer' editing and involves the tRNA(Pro)-independent hydrolysis of activated Ala-AMP. The other activity is designated 'posttransfer' editing and involves deacylation of mischarged Ala-tRNA(Pro). The misacylated Cys-tRNA(Pro) is not edited by ProRS. This Vibrio parahaemolyticus serotype O3:K6 (strain RIMD 2210633) protein is Proline--tRNA ligase.